Here is a 208-residue protein sequence, read N- to C-terminus: High frequency lysogenization protein HflD homolog (208 aa).

It belongs to the HflD family.

It is found in the cytoplasm. It localises to the cell inner membrane. The polypeptide is High frequency lysogenization protein HflD homolog (Edwardsiella ictaluri (strain 93-146)).